The following is a 26-amino-acid chain: U1-poneritoxin-Ni1b (26 aa).

The protein belongs to the non-disulfide-bridged peptide (NDBP) superfamily. Medium-length antimicrobial peptide (group 3) family. Ponericin-W subfamily. In terms of tissue distribution, expressed by the venom gland.

The protein resides in the secreted. It is found in the target cell membrane. Functionally, has a broad spectrum of activity against both Gram-positive and Gram-negative bacteria and S.cerevisiae. Has insecticidal and hemolytic activities. May act by disrupting the integrity of the bacterial cell membrane. The polypeptide is U1-poneritoxin-Ni1b (Neoponera inversa (Ant)).